The primary structure comprises 520 residues: Amine oxidase [flavin-containing] B (520 aa).

Ser-2 is subject to N-acetylserine. Topologically, residues 2–489 (SGKCDVVVVG…TFLERHLPSV (488 aa)) are cytoplasmic. At Lys-52 the chain carries N6-acetyllysine. The residue at position 397 (Cys-397) is an S-8alpha-FAD cysteine. The helical; Anchor for type IV membrane protein transmembrane segment at 490-516 (PGLLRLIGLTAIFSATALGVLAHKRGL) threads the bilayer. Residues 517–520 (LVRV) are Mitochondrial intermembrane-facing.

The protein belongs to the flavin monoamine oxidase family. In terms of assembly, monomer, homo- or heterodimer (containing two subunits of similar size). Each subunit contains a covalently bound flavin. Enzymatically active as monomer. FAD serves as cofactor.

It localises to the mitochondrion outer membrane. It catalyses the reaction a secondary aliphatic amine + O2 + H2O = a primary amine + an aldehyde + H2O2. The catalysed reaction is (R)-adrenaline + O2 + H2O = (R)-3,4-dihydroxymandelaldehyde + methylamine + H2O2. It carries out the reaction a primary methyl amine + O2 + H2O = an aldehyde + H2O2 + NH4(+). The enzyme catalyses benzylamine + O2 + H2O = benzaldehyde + H2O2 + NH4(+). It catalyses the reaction dopamine + O2 + H2O = 3,4-dihydroxyphenylacetaldehyde + H2O2 + NH4(+). The catalysed reaction is tyramine + O2 + H2O = (4-hydroxyphenyl)acetaldehyde + H2O2 + NH4(+). It carries out the reaction (R)-noradrenaline + O2 + H2O = (R)-3,4-dihydroxymandelaldehyde + H2O2 + NH4(+). The enzyme catalyses 2-phenylethylamine + O2 + H2O = 2-phenylacetaldehyde + H2O2 + NH4(+). It catalyses the reaction N-acetylputrescine + O2 + H2O = 4-acetamidobutanal + H2O2 + NH4(+). Functionally, catalyzes the oxidative deamination of primary and some secondary amines such as neurotransmitters, and exogenous amines including the tertiary amine, neurotoxin 1-methyl-4-phenyl-1,2,3,6-tetrahydropyridine (MPTP), with concomitant reduction of oxygen to hydrogen peroxide and participates in the metabolism of neuroactive and vasoactive amines in the central nervous system and peripheral tissues. Preferentially degrades benzylamine and phenylethylamine. This chain is Amine oxidase [flavin-containing] B, found in Canis lupus familiaris (Dog).